The following is a 190-amino-acid chain: Adenine phosphoribosyltransferase (190 aa).

Belongs to the purine/pyrimidine phosphoribosyltransferase family. Homodimer.

It is found in the cytoplasm. The enzyme catalyses AMP + diphosphate = 5-phospho-alpha-D-ribose 1-diphosphate + adenine. It functions in the pathway purine metabolism; AMP biosynthesis via salvage pathway; AMP from adenine: step 1/1. Catalyzes a salvage reaction resulting in the formation of AMP, that is energically less costly than de novo synthesis. In Cupriavidus necator (strain ATCC 17699 / DSM 428 / KCTC 22496 / NCIMB 10442 / H16 / Stanier 337) (Ralstonia eutropha), this protein is Adenine phosphoribosyltransferase.